A 322-amino-acid chain; its full sequence is Homoserine kinase (322 aa).

Residue 107–117 (PLSSGMGGSAA) participates in ATP binding.

The protein belongs to the GHMP kinase family. Homoserine kinase subfamily.

It is found in the cytoplasm. It catalyses the reaction L-homoserine + ATP = O-phospho-L-homoserine + ADP + H(+). It participates in amino-acid biosynthesis; L-threonine biosynthesis; L-threonine from L-aspartate: step 4/5. Its function is as follows. Catalyzes the ATP-dependent phosphorylation of L-homoserine to L-homoserine phosphate. The chain is Homoserine kinase from Xylella fastidiosa (strain 9a5c).